Here is a 167-residue protein sequence, read N- to C-terminus: Antibacterial peptide PMAP-37 (167 aa).

The signal sequence occupies residues 1–29 (METQRASLCLGRWSLWLLLLALVVPSASA). Positions 30 to 130 (QALSYREAVL…DITCNEIQSV (101 aa)) are excised as a propeptide. Cystine bridges form between Cys-85/Cys-96 and Cys-107/Cys-124.

Belongs to the cathelicidin family.

The protein resides in the secreted. Functionally, exerts antimicrobial activity against both Gram-positive and negative bacteria with minimal inhibitory concentrations ranging over 1-4 micro molar. Its activity appears to be mediated by its ability to damage bacterial membranes. The polypeptide is Antibacterial peptide PMAP-37 (PMAP37) (Sus scrofa (Pig)).